Reading from the N-terminus, the 284-residue chain is 2-dehydro-3-deoxyphosphooctonate aldolase (284 aa).

Belongs to the KdsA family.

The protein localises to the cytoplasm. It catalyses the reaction D-arabinose 5-phosphate + phosphoenolpyruvate + H2O = 3-deoxy-alpha-D-manno-2-octulosonate-8-phosphate + phosphate. It functions in the pathway carbohydrate biosynthesis; 3-deoxy-D-manno-octulosonate biosynthesis; 3-deoxy-D-manno-octulosonate from D-ribulose 5-phosphate: step 2/3. It participates in bacterial outer membrane biogenesis; lipopolysaccharide biosynthesis. This is 2-dehydro-3-deoxyphosphooctonate aldolase from Burkholderia multivorans (strain ATCC 17616 / 249).